The chain runs to 436 residues: [Pyruvate dehydrogenase (acetyl-transferring)] kinase isozyme 1, mitochondrial (436 aa).

The transit peptide at M1–F28 directs the protein to the mitochondrion. Position 136 is a phosphotyrosine; by FGFR1 (Y136). The Histidine kinase domain maps to Y163 to S393. At Y243 the chain carries Phosphotyrosine; by FGFR1, ABL1, FLT3 and JAK2. Position 244 is a phosphotyrosine; by FGFR1 (Y244). ATP-binding positions include E279–R286, D318, S337–T338, and G354–L359. T338 bears the Phosphothreonine mark. K405 carries the N6-succinyllysine modification.

This sequence belongs to the PDK/BCKDK protein kinase family. In terms of assembly, homodimer, and heterodimer with PDK2. Interacts with the pyruvate dehydrogenase complex subunit DLAT, and is part of the multimeric pyruvate dehydrogenase complex that contains multiple copies of pyruvate dehydrogenase (E1), dihydrolipoamide acetyltransferase (DLAT, E2) and lipoamide dehydrogenase (DLD, E3). Interacts with phosphoglycerate kinase PGK1; the interaction is direct, occurs under hypoxic conditions and leads to PDK1-mediated inhibition of pyruvate dehydrogenase complex activity. Phosphorylated by constitutively activated ABL1, FGFR1, FLT3 and JAK2 (in vitro), and this may also occur in cancer cells that express constitutively activated ABL1, FGFR1, FLT3 and JAK2. Phosphorylation at Tyr-243 and Tyr-244 strongly increases kinase activity, while phosphorylation at Tyr-136 has a lesser effect. Phosphorylated under hypoxic conditions at Thr-338 by phosphoglycerate kinase PGK1 which has an activating effect. Expressed predominantly in the heart. Detected at lower levels in liver, skeletal muscle and pancreas.

The protein localises to the mitochondrion matrix. It catalyses the reaction L-seryl-[pyruvate dehydrogenase E1 alpha subunit] + ATP = O-phospho-L-seryl-[pyruvate dehydrogenase E1 alpha subunit] + ADP + H(+). With respect to regulation, activity is enhanced by binding to the pyruvate dehydrogenase subunit DLAT. Inhibited by AZD7545; this compound interferes with DLAT binding and thereby inhibits kinase activity. Inhibited by dichloroacetate and radicicol. Activated under hypoxic conditions by phosphoglycerate kinase PGK1-mediated phosphorylation at Thr-338. Functionally, kinase that plays a key role in regulation of glucose and fatty acid metabolism and homeostasis via phosphorylation of the pyruvate dehydrogenase subunits PDHA1 and PDHA2. This inhibits pyruvate dehydrogenase activity, and thereby regulates metabolite flux through the tricarboxylic acid cycle, down-regulates aerobic respiration and inhibits the formation of acetyl-coenzyme A from pyruvate. Plays an important role in cellular responses to hypoxia and is important for cell proliferation under hypoxia. In Homo sapiens (Human), this protein is [Pyruvate dehydrogenase (acetyl-transferring)] kinase isozyme 1, mitochondrial (PDK1).